The following is a 61-amino-acid chain: U-stichotoxin-Hcr1a (61 aa).

The N-terminal stretch at 1–21 (MKPAIFLMLFVAMFLISEGEG) is a signal peptide. Residues 22–31 (FKPKDAPQER) constitute a propeptide that is removed on maturation. Position 36 is a hydroxyproline (Pro36). Intrachain disulfides connect Cys41–Cys53 and Cys44–Cys59.

Belongs to the Hau1a/HC18/HC19 family.

It localises to the secreted. It is found in the nematocyst. In terms of biological role, toxin that is lethal to crab. Does not produce the typical symptoms associated with sodium channel toxins in crabs, suggesting that it likely does not act on sodium channels. The chain is U-stichotoxin-Hcr1a from Radianthus crispa (Leathery sea anemone).